A 263-amino-acid chain; its full sequence is Mediator of RNA polymerase II transcription subunit 4 (263 aa).

The stretch at 61–111 (LQLAAEQAGIEKNMDALREQVRKQDEEINQLQRQLKEAEQILATSIFQARQ) forms a coiled coil. 2 disordered regions span residues 209-228 (APNQ…MGAG) and 235-263 (DTRA…SDSQ). A compositionally biased stretch (low complexity) spans 251–263 (STESSSSSSSDSQ).

The protein belongs to the Mediator complex subunit 4 family. In terms of assembly, component of the Mediator complex.

The protein resides in the nucleus. Its function is as follows. Component of the Mediator complex, a coactivator involved in the regulated transcription of nearly all RNA polymerase II-dependent genes. Mediator functions as a bridge to convey information from gene-specific regulatory proteins to the basal RNA polymerase II transcription machinery. Mediator is recruited to promoters by direct interactions with regulatory proteins and serves as a scaffold for the assembly of a functional preinitiation complex with RNA polymerase II and the general transcription factors. This Anopheles gambiae (African malaria mosquito) protein is Mediator of RNA polymerase II transcription subunit 4 (MED4).